Consider the following 627-residue polypeptide: Mitochondrial Rho GTPase 1 (627 aa).

Positions 1-169 (MATVRICVCG…FFLCQKAVTH (169 aa)) constitute a Miro 1 domain. Over 1-599 (MATVRICVCG…PRSNEEGPDR (599 aa)) the chain is Cytoplasmic. GTP contacts are provided by residues 10 to 17 (GDESTGKS), 58 to 62 (DTSAR), and 114 to 117 (NKSD). EF-hand domains are found at residues 185 to 220 (LCIN…CFDK) and 305 to 340 (AGYR…APGL). The Ca(2+) site is built by Asp198, Asp200, Asp202, Tyr204, Glu209, Asp318, Asp320, Asp322, and Glu329. The region spanning 420–584 (RNVVLCYVLG…FVAYADAATT (165 aa)) is the Miro 2 domain. GTP contacts are provided by residues 429 to 436 (GASGAGKS), 465 to 469 (ELPGG), and 534 to 537 (LKAD). A helical; Anchor for type IV membrane protein transmembrane segment spans residues 600 to 620 (TSLYIALGATACAGVAALTIW). Over 621 to 627 (RRATNAL) the chain is Mitochondrial intermembrane.

The protein belongs to the mitochondrial Rho GTPase family.

It localises to the mitochondrion outer membrane. Mitochondrial GTPase involved in mitochondrial trafficking. Probably involved in control of anterograde transport of mitochondria and their subcellular distribution. This chain is Mitochondrial Rho GTPase 1 (GEM1), found in Gibberella zeae (strain ATCC MYA-4620 / CBS 123657 / FGSC 9075 / NRRL 31084 / PH-1) (Wheat head blight fungus).